A 149-amino-acid chain; its full sequence is Transcriptional repressor NrdR (149 aa).

Residues 3–34 (CPFCSATDTKVIDSRLVADGHQVRRRRECVQC) fold into a zinc finger. Positions 49-139 (PRVVKQDGSR…VYRAFEDVSE (91 aa)) constitute an ATP-cone domain.

The protein belongs to the NrdR family. It depends on Zn(2+) as a cofactor.

Its function is as follows. Negatively regulates transcription of bacterial ribonucleotide reductase nrd genes and operons by binding to NrdR-boxes. In Shewanella piezotolerans (strain WP3 / JCM 13877), this protein is Transcriptional repressor NrdR.